The following is a 388-amino-acid chain: Protochlorophyllide reductase A, chloroplastic (388 aa).

The transit peptide at 1-74 (MALQLLPSTL…SPSGKKTLRQ (74 aa)) directs the protein to the chloroplast. Over residues 48–68 (VATAPSPVTTSPGSTASSPSG) the composition is skewed to low complexity. The interval 48 to 69 (VATAPSPVTTSPGSTASSPSGK) is disordered.

It belongs to the short-chain dehydrogenases/reductases (SDR) family. POR subfamily.

Its subcellular location is the plastid. The protein resides in the chloroplast. The enzyme catalyses chlorophyllide a + NADP(+) = protochlorophyllide a + NADPH + H(+). It functions in the pathway porphyrin-containing compound metabolism; chlorophyll biosynthesis. Functionally, phototransformation of protochlorophyllide (Pchlide) to chlorophyllide (Chlide). This Hordeum vulgare (Barley) protein is Protochlorophyllide reductase A, chloroplastic (PORA).